Consider the following 75-residue polypeptide: Small ribosomal subunit protein bS18 (75 aa).

The protein belongs to the bacterial ribosomal protein bS18 family. As to quaternary structure, part of the 30S ribosomal subunit. Forms a tight heterodimer with protein bS6.

Functionally, binds as a heterodimer with protein bS6 to the central domain of the 16S rRNA, where it helps stabilize the platform of the 30S subunit. This Pseudoalteromonas atlantica (strain T6c / ATCC BAA-1087) protein is Small ribosomal subunit protein bS18.